A 707-amino-acid polypeptide reads, in one-letter code: Integrator complex subunit 13 (707 aa).

Positions 565 to 625 are enriched in basic and acidic residues; the sequence is PPEEEERKKR…AEAEVIKDSP (61 aa). Residues 565-651 are disordered; sequence PPEEEERKKR…TGPAEKSKGP (87 aa). Positions 567 to 622 form a coiled coil; the sequence is EEEERKKRGRKREDKEEKAEKPPKENEHEKKWQESERVKSVLDREKEDLAEAEVIK. Positions 573-583 match the Nuclear localization signal (NLS) motif; the sequence is KRGRKREDKEE. Residues 650 to 695 form a cleavage module binding motif (CMBM) region; it reads GPMSLLSLWSSRINTANSRKHQEFVGRLNSVNNKAELYQHLKEENG.

This sequence belongs to the Integrator subunit 13 family. Component of the Integrator complex, composed of core subunits INTS1, INTS2, INTS3, INTS4, INTS5, INTS6, INTS7, INTS8, INTS9/RC74, INTS10, INTS11/CPSF3L, INTS12, INTS13, INTS14 and INTS15. The core complex associates with protein phosphatase 2A subunits PPP2CA and PPP2R1A, to form the Integrator-PP2A (INTAC) complex. INTS13 is part of the tail subcomplex, composed of INTS10, INTS13, INTS14 and INTS15.

It localises to the nucleus. Its subcellular location is the cytoplasm. Its function is as follows. Component of the integrator complex, a multiprotein complex that terminates RNA polymerase II (Pol II) transcription in the promoter-proximal region of genes. The integrator complex provides a quality checkpoint during transcription elongation by driving premature transcription termination of transcripts that are unfavorably configured for transcriptional elongation: the complex terminates transcription by (1) catalyzing dephosphorylation of the C-terminal domain (CTD) of Pol II subunit POLR2A/RPB1 and SUPT5H/SPT5, (2) degrading the exiting nascent RNA transcript via endonuclease activity and (3) promoting the release of Pol II from bound DNA. The integrator complex is also involved in terminating the synthesis of non-coding Pol II transcripts, such as enhancer RNAs (eRNAs), small nuclear RNAs (snRNAs), telomerase RNAs and long non-coding RNAs (lncRNAs). Within the integrator complex, INTS13 is part of the integrator tail module and acts as a platform for the recruitment of transcription factors at promoters. This chain is Integrator complex subunit 13, found in Xenopus tropicalis (Western clawed frog).